The sequence spans 993 residues: Serine/threonine-protein phosphatase 6 regulatory ankyrin repeat subunit B (993 aa).

28 ANK repeats span residues 7–36, 40–69, 73–102, 106–135, 139–168, 172–201, 205–234, 238–267, 271–301, 305–334, 338–367, 371–400, 404–433, 437–466, 470–498, 531–561, 566–595, 599–628, 633–662, 669–698, 702–731, 735–764, 771–800, 803–832, 838–867, 871–901, 905–934, and 941–970; these read TDQPPLVQAIFSGDPEEIRMLIHKTEDVNT, EKRTPLHVAAFLGDAEIIELLILSGARVNA, MWLTPLHRAVASRSEEAVQVLIKHSADVNA, NWQTPLHVAAANKAVKCAEVIIPLLSSVNV, GGRTALHHAALNGHVEMVNLLLAKGANINA, KDRRALHWAAYMGHLDVVALLINHGAEVTC, KGYTPLHAAASNGQINVVKHLLNLGVEIDE, YGNTALHIACYNGQDAVVNELIDYGANVNQ, NGFTPLHFAAASTHGALCLELLVNNGADVNI, DGKSPLHMTAVHGRFTRSQTLIQNGGEIDC, DGNTPLHVAARYGHELLINTLITSGADTAK, HSMFPLHLAALNAHSDCCRKLLSSGFEIDT, FGRTCLHAAAAGGNVECIKLLQSSGADFHK, CGRTPLHYAAANCHFHCIETLVTTGANVNE, WGRTALHYAAASDMDRNKTILGNAHDNSE, EGYNSIHYAAAYGHRQCLELLLERTNSGFEE, ATKSPLHLAAYNGHHQALEVLLQSLVDLDI, KGRTALDLAAFKGHTECVEALINQGASIFV, TKRTPLHASVINGHTLCLRLLLEIADNPEA, KGQTPLMLAVAYGHIDAVSLLLEKEANVDT, LGCTALHRGIMTGHEECVQMLLEQEVSILC, RGRTPLHYAAARGHATWLSELLQMALSEED, QGYTPLHWACYNGNENCIEVLLEQKCFRKF, NPFTPLHCAIINDHGNCASLLLGAIDSSIV, KGRTPLHAAAFADHVECLQLLLRHSAPVNA, SGKTALMMAAENGQAGAVDILVNSAQADLTV, DLNTPLHLACSKGHEKCALLILDKIQDESL, and ALQTPLHVAARNGLKVVVEELLAKGACVLA.

In terms of assembly, protein phosphatase 6 (PP6) holoenzyme is proposed to be a heterotrimeric complex formed by the catalytic subunit, a SAPS domain-containing subunit (PP6R) and an ankyrin repeat-domain containing regulatory subunit (ARS). Interacts with PPP6R1.

In terms of biological role, putative regulatory subunit of protein phosphatase 6 (PP6) that may be involved in the recognition of phosphoprotein substrates. The chain is Serine/threonine-protein phosphatase 6 regulatory ankyrin repeat subunit B (ANKRD44) from Homo sapiens (Human).